Here is a 134-residue protein sequence, read N- to C-terminus: Putative transposase InsN for insertion sequence element IS911A (134 aa).

This sequence belongs to the transposase 8 family.

Functionally, involved in the transposition of the insertion sequence IS911. The sequence is that of Putative transposase InsN for insertion sequence element IS911A (insN1) from Escherichia coli (strain K12).